The chain runs to 253 residues: Pimeloyl-[acyl-carrier protein] methyl ester esterase (253 aa).

Residues W18, 78-79 (SL), and 139-143 (FLALD) each bind substrate. Residue S78 is the Nucleophile of the active site. Residues D203 and H231 contribute to the active site. H231 contacts substrate.

Belongs to the AB hydrolase superfamily. Carboxylesterase BioH family. In terms of assembly, monomer.

It localises to the cytoplasm. It catalyses the reaction 6-carboxyhexanoyl-[ACP] methyl ester + H2O = 6-carboxyhexanoyl-[ACP] + methanol + H(+). Its pathway is cofactor biosynthesis; biotin biosynthesis. Its function is as follows. The physiological role of BioH is to remove the methyl group introduced by BioC when the pimeloyl moiety is complete. It allows to synthesize pimeloyl-ACP via the fatty acid synthetic pathway through the hydrolysis of the ester bonds of pimeloyl-ACP esters. In Xanthomonas oryzae pv. oryzae (strain MAFF 311018), this protein is Pimeloyl-[acyl-carrier protein] methyl ester esterase.